The primary structure comprises 258 residues: Imidazole glycerol phosphate synthase subunit HisF (258 aa).

Active-site residues include Asp-12 and Asp-131.

This sequence belongs to the HisA/HisF family. In terms of assembly, heterodimer of HisH and HisF.

Its subcellular location is the cytoplasm. It catalyses the reaction 5-[(5-phospho-1-deoxy-D-ribulos-1-ylimino)methylamino]-1-(5-phospho-beta-D-ribosyl)imidazole-4-carboxamide + L-glutamine = D-erythro-1-(imidazol-4-yl)glycerol 3-phosphate + 5-amino-1-(5-phospho-beta-D-ribosyl)imidazole-4-carboxamide + L-glutamate + H(+). The protein operates within amino-acid biosynthesis; L-histidine biosynthesis; L-histidine from 5-phospho-alpha-D-ribose 1-diphosphate: step 5/9. Functionally, IGPS catalyzes the conversion of PRFAR and glutamine to IGP, AICAR and glutamate. The HisF subunit catalyzes the cyclization activity that produces IGP and AICAR from PRFAR using the ammonia provided by the HisH subunit. This Paenarthrobacter aurescens (strain TC1) protein is Imidazole glycerol phosphate synthase subunit HisF.